Here is a 2492-residue protein sequence, read N- to C-terminus: Transcriptional regulator ATRX (2492 aa).

Positions 1 to 147 (MTAEPMSESK…KDDFKGPEFR (147 aa)) are disordered. K10 is covalently cross-linked (Glycyl lysine isopeptide (Lys-Gly) (interchain with G-Cter in SUMO2)). Positions 17–27 (KLHDFLAHSSE) are enriched in basic and acidic residues. A phosphoserine mark is found at S25 and S34. Residues 40–57 (MNQNTDKISGSGSNSDMM) show a composition bias toward polar residues. Over residues 58-72 (ENSKEEGTSSSEKSK) the composition is skewed to basic and acidic residues. Position 89 is a phosphotyrosine (Y89). Residues S92 and S112 each carry the phosphoserine modification. A compositionally biased stretch (acidic residues) spans 92–108 (SDDEKPLDDETVNEDAS). The span at 135 to 147 (NEDKDDFKGPEFR) shows a compositional bias: basic and acidic residues. Residues K138 and K142 each participate in a glycyl lysine isopeptide (Lys-Gly) (interchain with G-Cter in SUMO2) cross-link. Positions 159 to 296 (KRGEDGLHGI…LEQLLQQNKK (138 aa)) constitute an ADD domain. A GATA-type; atypical zinc finger spans residues 170-206 (SCTACGQQVNHFQKDSIYRHPSLQVLICKNCFKYYMS). A Phosphoserine modification is found at S213. A PHD-type; atypical zinc finger spans residues 217–272 (DEQCRWCAEGGNLICCDFCHNAFCKKCILRNLGRKELSTIMDENNQWYCYICHPEP). K299 participates in a covalent cross-link: Glycyl lysine isopeptide (Lys-Gly) (interchain with G-Cter in SUMO2). A Phosphoserine modification is found at S316. A Glycyl lysine isopeptide (Lys-Gly) (interchain with G-Cter in SUMO2) cross-link involves residue K438. The segment covering 445–502 (KGEKPCALEKKDISKSEAKLSRKQVDSEHMHQNVPTEEQRTNKSTGGEHKKSDRKEEP) has biased composition (basic and acidic residues). 2 disordered regions span residues 445-516 (KGEK…LDMD) and 535-576 (AMEV…GIKS). Residues 550–567 (SGTEQEVESSSVKLNISS) show a composition bias toward polar residues. The PxVxL motif motif lies at 581-594 (KVTKELYVKLTPVS). The residue at position 591 (T591) is a Phosphothreonine. A disordered region spans residues 593 to 616 (VSLSNSPIKGADCQEVPQDKDGYK). A phosphoserine mark is found at S594 and S598. A Glycyl lysine isopeptide (Lys-Gly) (interchain with G-Cter in SUMO1); alternate cross-link involves residue K623. K623 is covalently cross-linked (Glycyl lysine isopeptide (Lys-Gly) (interchain with G-Cter in SUMO2); alternate). S634 carries the post-translational modification Phosphoserine. The disordered stretch occupies residues 649–956 (EESDLRRSPR…KHLKTKTCKK (308 aa)). At T674 the chain carries Phosphothreonine. Phosphoserine is present on residues S675, S677, S729, and S731. The span at 755-777 (NEIHTNHKTLYDLKTQAGKDDKG) shows a compositional bias: basic and acidic residues. S784, S819, S849, S850, S875, and S876 each carry phosphoserine. A compositionally biased stretch (basic and acidic residues) spans 843–864 (NTKDFDSSEDEKHSKKGMDNQG). Basic and acidic residues predominate over residues 878-887 (DAERKQERET). S889 is modified (phosphoserine). Composition is skewed to basic and acidic residues over residues 894–909 (TVDKDTTIMELRDRLP) and 920–944 (GVDKLSGKEESFTSLEVRKVAETKE). A compositionally biased stretch (basic residues) spans 945 to 955 (KSKHLKTKTCK). A Phosphoserine modification is found at S962. Residue K967 is modified to N6-acetyllysine. A compositionally biased stretch (basic and acidic residues) spans 968 to 1004 (FLKKDQSDETSEDDKKQSKKGTEEKKKPSDFKKKVIK). The disordered stretch occupies residues 968–1479 (FLKKDQSDET…SKSPGKGRKK (512 aa)). S974 bears the Phosphoserine mark. T977 is modified (phosphothreonine). Residue K1004 forms a Glycyl lysine isopeptide (Lys-Gly) (interchain with G-Cter in SUMO2) linkage. Residues S1011, S1012, and S1013 each carry the phosphoserine modification. Residues 1015–1027 (GTEKLPEREEICH) are compositionally biased toward basic and acidic residues. Basic residues predominate over residues 1045–1055 (KSKKIRDKTSK). Over residues 1056–1082 (KKDELSDYAEKSTGKGDSCDSSEDKKS) the composition is skewed to basic and acidic residues. At S1061 the chain carries Phosphoserine. At Y1063 the chain carries Phosphotyrosine. Positions 1090–1102 (EKKRCKLLGKSSR) are enriched in basic residues. A compositionally biased stretch (basic and acidic residues) spans 1103–1139 (KRQDCSSSDTEKYSMKEDGCNSSDKRLKRIELRERRN). The segment covering 1167–1195 (KKKQRTSSKKKAVIVKEKKRNSLRTSTKR) has biased composition (basic residues). The tract at residues 1189–1326 (LRTSTKRKQA…KNQVNSESDS (138 aa)) is interaction with DAXX. Residues 1233 to 1246 (LVLSSHTGFCQSSG) are compositionally biased toward polar residues. 3 positions are modified to phosphoserine: S1244, S1245, and S1253. The span at 1267 to 1281 (PENRIAKKMLLEEIK) shows a compositional bias: basic and acidic residues. Residues 1286–1297 (SDEDGSSDDEPE) are compositionally biased toward acidic residues. The segment covering 1298 to 1308 (EGKKRTGKQNE) has biased composition (basic and acidic residues). Phosphoserine is present on residues S1322, S1324, and S1326. The segment covering 1334–1345 (PRYRHRLLRHKL) has biased composition (basic residues). 2 positions are modified to phosphoserine: S1348 and S1352. Composition is skewed to basic and acidic residues over residues 1353 to 1368 (GEEKKTKPKEHKEVKG) and 1408 to 1417 (KKAELEENQR). Over residues 1419-1428 (YKQKKKRRRI) the composition is skewed to basic residues. The segment covering 1443-1468 (EEEEEEKEEEEEEEEEEEEEEEDEND) has biased composition (acidic residues). A Glycyl lysine isopeptide (Lys-Gly) (interchain with G-Cter in SUMO2) cross-link involves residue K1488. S1527 carries the post-translational modification Phosphoserine. At T1529 the chain carries Phosphothreonine. The Helicase ATP-binding domain occupies 1581–1768 (KTKKSPGSGC…HCMVNFIKEN (188 aa)). 1594–1601 (HCMGLGKT) serves as a coordination point for ATP. A DEGH box motif is present at residues 1719–1722 (DEGH). A phosphoserine mark is found at S1906 and S1913. A disordered region spans residues 1913-2000 (SDSDETSMSL…SSNPSSPAPD (88 aa)). A compositionally biased stretch (basic residues) spans 1929-1938 (KKKKKGKKGK). K1982 is covalently cross-linked (Glycyl lysine isopeptide (Lys-Gly) (interchain with G-Cter in SUMO1); alternate). K1982 participates in a covalent cross-link: Glycyl lysine isopeptide (Lys-Gly) (interchain with G-Cter in SUMO2); alternate. K1987 participates in a covalent cross-link: Glycyl lysine isopeptide (Lys-Gly) (interchain with G-Cter in SUMO2). Residues 1990–1999 (SSSNPSSPAP) are compositionally biased toward low complexity. Phosphoserine occurs at positions 1992 and 1996. Positions 2010-2280 (DAEVLEHSGK…RKAAWAEYEA (271 aa)) are interaction with MECP2. The region spanning 2025-2205 (EILRMAEEIG…ERHFTMNELT (181 aa)) is the Helicase C-terminal domain. S2220 is modified (phosphoserine). Residues 2462–2492 (PVAGGMQPPPLQRAPPPMRSKNPGPSQGKSM) are disordered. The segment covering 2468 to 2479 (QPPPLQRAPPPM) has biased composition (pro residues). Omega-N-methylarginine occurs at positions 2474 and 2480.

It belongs to the SNF2/RAD54 helicase family. In terms of assembly, interacts with DAXX to form the chromatin remodeling complex ATRX:DAXX. Probably binds EZH2. Binds annexin V in a calcium and phosphatidylcholine/phosphatidylserine-dependent manner. Interacts directly with CBX5 via the PxVxL motif. Interacts with RAD50, MRE11 and NBN; indicative for an association with the MRN complex. Interacts with histone MACROH2A1. Interacts with histone H3 peptides methylated at 'Lys-10' with preferences H3K9me3 &gt; H3K9me2 &gt; H3K9me1. Interacts with histone H3 peptides unmethylated at 'Lys-5' (H3K4me0). Interacts with MECP2, SMC1 and SMC3. Interacts with SETDB1, TRIM28 and ZNF274. In terms of processing, phosphorylated at serine residues during mitose. Phosphorylation may promote the release from the nuclear matrix and progression to mitosis. In terms of tissue distribution, ubiquitous.

It is found in the nucleus. The protein resides in the chromosome. The protein localises to the telomere. It localises to the PML body. It carries out the reaction ATP + H2O = ADP + phosphate + H(+). In terms of biological role, involved in transcriptional regulation and chromatin remodeling. Facilitates DNA replication in multiple cellular environments and is required for efficient replication of a subset of genomic loci. Binds to DNA tandem repeat sequences in both telomeres and euchromatin and in vitro binds DNA quadruplex structures. May help stabilizing G-rich regions into regular chromatin structures by remodeling G4 DNA and incorporating H3.3-containing nucleosomes. Catalytic component of the chromatin remodeling complex ATRX:DAXX which has ATP-dependent DNA translocase activity and catalyzes the replication-independent deposition of histone H3.3 in pericentric DNA repeats outside S-phase and telomeres, and the in vitro remodeling of H3.3-containing nucleosomes. Its heterochromatin targeting is proposed to involve a combinatorial readout of histone H3 modifications (specifically methylation states of H3K9 and H3K4) and association with CBX5. Involved in maintaining telomere structural integrity in embryonic stem cells which probably implies recruitment of CBX5 to telomeres. Reports on the involvement in transcriptional regulation of telomeric repeat-containing RNA (TERRA) are conflicting; according to a report, it is not sufficient to decrease chromatin condensation at telomeres nor to increase expression of telomeric RNA in fibroblasts. May be involved in telomere maintenance via recombination in ALT (alternative lengthening of telomeres) cell lines. Acts as a negative regulator of chromatin incorporation of transcriptionally repressive histone MACROH2A1, particularily at telomeres and the alpha-globin cluster in erythroleukemic cells. Participates in the allele-specific gene expression at the imprinted IGF2/H19 gene locus. On the maternal allele, required for the chromatin occupancy of SMC1 and CTCTF within the H19 imprinting control region (ICR) and involved in esatblishment of histone tails modifications in the ICR. May be involved in brain development and facial morphogenesis. Binds to zinc-finger coding genes with atypical chromatin signatures and regulates its H3K9me3 levels. Forms a complex with ZNF274, TRIM28 and SETDB1 to facilitate the deposition and maintenance of H3K9me3 at the 3' exons of zinc-finger genes. This Homo sapiens (Human) protein is Transcriptional regulator ATRX (ATRX).